A 980-amino-acid chain; its full sequence is Peroxisomal ATPase PEX6 (980 aa).

Arginine 119 carries the omega-N-methylarginine modification. Residues 470-477 (GPPGSGKT) and 744-751 (GPPGTGKT) contribute to the ATP site.

The protein belongs to the AAA ATPase family. In terms of assembly, interacts with PEX1; forming the PEX1-PEX6 AAA ATPase complex, which is composed of a heterohexamer formed by a trimer of PEX1-PEX6 dimers. Interacts with PEX26; interaction is direct and promotes recruitment to peroxisomal membranes. Interacts with ZFAND6.

The protein resides in the cytoplasm. It is found in the cytosol. The protein localises to the peroxisome membrane. Its subcellular location is the cell projection. It localises to the cilium. The protein resides in the photoreceptor outer segment. It carries out the reaction ATP + H2O = ADP + phosphate + H(+). Its function is as follows. Component of the PEX1-PEX6 AAA ATPase complex, a protein dislocase complex that mediates the ATP-dependent extraction of the PEX5 receptor from peroxisomal membranes, an essential step for PEX5 recycling. Specifically recognizes PEX5 monoubiquitinated at 'Cys-11', and pulls it out of the peroxisome lumen through the PEX2-PEX10-PEX12 retrotranslocation channel. Extraction by the PEX1-PEX6 AAA ATPase complex is accompanied by unfolding of the TPR repeats and release of bound cargo from PEX5. This chain is Peroxisomal ATPase PEX6, found in Cricetulus griseus (Chinese hamster).